Reading from the N-terminus, the 331-residue chain is Cathepsin S (331 aa).

An N-terminal signal peptide occupies residues 1-16 (MKRLVCVLLVCSSAVA). A propeptide spans 17–114 (QLHKDPTLDH…ITYKSNPNRI (98 aa)) (activation peptide). N104 carries N-linked (GlcNAc...) asparagine glycosylation. 4 disulfide bridges follow: C126-C224, C136-C180, C170-C213, and C272-C320. Residue C139 is part of the active site. Residues H278 and N298 contribute to the active site.

This sequence belongs to the peptidase C1 family. As to quaternary structure, monomer.

It is found in the lysosome. The protein resides in the secreted. The protein localises to the cytoplasmic vesicle. Its subcellular location is the phagosome. It catalyses the reaction Similar to cathepsin L, but with much less activity on Z-Phe-Arg-|-NHMec, and more activity on the Z-Val-Val-Arg-|-Xaa compound.. Functionally, thiol protease. Key protease responsible for the removal of the invariant chain from MHC class II molecules and MHC class II antigen presentation. The bond-specificity of this proteinase is in part similar to the specificities of cathepsin L. This is Cathepsin S (CTSS) from Homo sapiens (Human).